Consider the following 305-residue polypeptide: tRNA dimethylallyltransferase (305 aa).

Residue 9 to 16 participates in ATP binding; it reads GPTASGKS. 11 to 16 contributes to the substrate binding site; the sequence is TASGKS. Positions 34 to 37 are interaction with substrate tRNA; the sequence is DSKQ.

Belongs to the IPP transferase family. As to quaternary structure, monomer. The cofactor is Mg(2+).

It carries out the reaction adenosine(37) in tRNA + dimethylallyl diphosphate = N(6)-dimethylallyladenosine(37) in tRNA + diphosphate. Its function is as follows. Catalyzes the transfer of a dimethylallyl group onto the adenine at position 37 in tRNAs that read codons beginning with uridine, leading to the formation of N6-(dimethylallyl)adenosine (i(6)A). This chain is tRNA dimethylallyltransferase, found in Anaplasma marginale (strain St. Maries).